The following is a 146-amino-acid chain: Hemoglobin subunit beta (146 aa).

A1 bears the N-acetylalanine mark. The Globin domain maps to 2–146 (SFDPHEKQLI…VAAALAAEYH (145 aa)). Heme b-binding residues include H63 and H92.

The protein belongs to the globin family. In terms of assembly, heterotetramer of two alpha chains and two beta chains. In terms of tissue distribution, red blood cells.

In terms of biological role, involved in oxygen transport from the lung to the various peripheral tissues. This Crocodylus niloticus (Nile crocodile) protein is Hemoglobin subunit beta (HBB).